The chain runs to 157 residues: Crossover junction endodeoxyribonuclease RuvC (157 aa).

Residues Asp7, Glu67, and Asp140 contribute to the active site. Residues Asp7, Glu67, and Asp140 each contribute to the Mg(2+) site.

This sequence belongs to the RuvC family. As to quaternary structure, homodimer which binds Holliday junction (HJ) DNA. The HJ becomes 2-fold symmetrical on binding to RuvC with unstacked arms; it has a different conformation from HJ DNA in complex with RuvA. In the full resolvosome a probable DNA-RuvA(4)-RuvB(12)-RuvC(2) complex forms which resolves the HJ. Mg(2+) serves as cofactor.

The protein resides in the cytoplasm. It catalyses the reaction Endonucleolytic cleavage at a junction such as a reciprocal single-stranded crossover between two homologous DNA duplexes (Holliday junction).. Its function is as follows. The RuvA-RuvB-RuvC complex processes Holliday junction (HJ) DNA during genetic recombination and DNA repair. Endonuclease that resolves HJ intermediates. Cleaves cruciform DNA by making single-stranded nicks across the HJ at symmetrical positions within the homologous arms, yielding a 5'-phosphate and a 3'-hydroxyl group; requires a central core of homology in the junction. The consensus cleavage sequence is 5'-(A/T)TT(C/G)-3'. Cleavage occurs on the 3'-side of the TT dinucleotide at the point of strand exchange. HJ branch migration catalyzed by RuvA-RuvB allows RuvC to scan DNA until it finds its consensus sequence, where it cleaves and resolves the cruciform DNA. The sequence is that of Crossover junction endodeoxyribonuclease RuvC from Rickettsia akari (strain Hartford).